A 578-amino-acid polypeptide reads, in one-letter code: Vi polysaccharide biosynthesis protein VipC/TviE (578 aa).

The protein operates within glycan metabolism; Vi-antigen biosynthesis. It functions in the pathway capsule biogenesis; capsule polysaccharide biosynthesis. The protein is Vi polysaccharide biosynthesis protein VipC/TviE (vipC) of Salmonella typhi.